A 300-amino-acid polypeptide reads, in one-letter code: Putative 1-phosphofructokinase (300 aa).

ATP contacts are provided by residues 214–219 (SDGAQG) and 246–247 (GD). Asp247 (proton acceptor) is an active-site residue.

The protein belongs to the carbohydrate kinase PfkB family.

It carries out the reaction beta-D-fructose 1-phosphate + ATP = beta-D-fructose 1,6-bisphosphate + ADP + H(+). Functionally, catalyzes the ATP-dependent phosphorylation of fructose-l-phosphate to fructose-l,6-bisphosphate. The polypeptide is Putative 1-phosphofructokinase (fruK) (Mycoplasma pneumoniae (strain ATCC 29342 / M129 / Subtype 1) (Mycoplasmoides pneumoniae)).